The primary structure comprises 801 residues: Protein ACCUMULATION AND REPLICATION OF CHLOROPLASTS 6, chloroplastic (801 aa).

The N-terminal 67 residues, 1–67, are a transit peptide targeting the chloroplast; that stretch reads MEALSHVGIG…SSSFATATTT (67 aa). The Stromal segment spans residues 68 to 618; sequence ATLVSPPPSI…ADMLKEASVK (551 aa). One can recognise a J domain in the interval 89–153; the sequence is DFYQVLGAQT…RSRREYNEGL (65 aa). The chain crosses the membrane as a helical span at residues 619 to 638; that stretch reads ILAAGVAIGLISLFSQKYFL. Residues 639 to 801 are Chloroplast intermembrane-facing; that stretch reads KSSSSFQRKD…KITEGSVLAS (163 aa). An interaction with PDV2 region spans residues 639–801; the sequence is KSSSSFQRKD…KITEGSVLAS (163 aa).

Self-interacts. Part of a complex made of ARC3, ARC6, FTSZ1 and FTSZ2. Interacts with FTSZ2-1 and FTSZ2-2 (via C-terminus), but not with FTSZ1; this interaction enables ARC3 binding to FTSZ2. Binds to CDT1A. Interacts (via C-terminus) with PDV2 (via C-terminus) in the chloroplast intermembrane space; this interaction induces homodimerization and leads to the formation of a heterotetramer containing two ARC6 and two PDV2 subunits. Interacts with MCD1 in the chloroplast stroma and facilitates its subsequent binding to FtsZ2-1. Interacts (via J domain) with CJD1 (via J-like domain). In terms of tissue distribution, mostly expressed in young leaves.

The protein resides in the plastid. The protein localises to the chloroplast inner membrane. In terms of biological role, component of the plastid division machinery consisting in a binary fission accomplished by the simultaneous constriction of the FtsZ ring on the stromal side of the inner envelope membrane, and the ARC5 ring on the cytosolic side of the outer envelope membrane. Involved in the initiation of proplastid and plastid division (including chloroplasts, statoliths and leukoplasts). Promotes the assembly and/or stabilization of the plastid-dividing FtsZ ring, functioning as an antagonistic regulator of FtsZ dynamics against CDP1 and facilitating MCD1 positioning to membrane tethered FtsZ filaments to form the chloroplast Z-Ring; inhibits GDP-induced disassembly of FTSZ2 but enables ARC3 binding to FTSZ2-1. Relays plastid division site position between stroma and outer surface via interactions with the stromal FtsZ ring and the outer membrane PDV2 that recruits cytoplasmic ARC5 ring. Required for plastid equatorial positioning of PDV2 and ARC5. May contribute to gravitropism in stems and hypocotyls. Seems to influence stromule (stroma-filled tubular extensions of the plastid envelope membrane) length and frequency. This is Protein ACCUMULATION AND REPLICATION OF CHLOROPLASTS 6, chloroplastic from Arabidopsis thaliana (Mouse-ear cress).